Consider the following 92-residue polypeptide: Defensin-like protein 294 (92 aa).

Residues 1 to 26 form the signal peptide; it reads MASRATSLFIFFFLISCTFMLLETNA. Disulfide bonds link C63–C82, C69–C87, and C75–C89.

It belongs to the DEFL family.

It localises to the secreted. In Arabidopsis thaliana (Mouse-ear cress), this protein is Defensin-like protein 294.